The chain runs to 732 residues: Elongation factor 2 (732 aa).

The 212-residue stretch at 19–230 (ERIRNMGIAA…VSFKDIVELT (212 aa)) folds into the tr-type G domain. GTP contacts are provided by residues 28-35 (AHIDHGKT), 94-98 (DTPGH), and 148-151 (NKVD). Histidine 597 is subject to Diphthamide.

It belongs to the TRAFAC class translation factor GTPase superfamily. Classic translation factor GTPase family. EF-G/EF-2 subfamily.

Its subcellular location is the cytoplasm. Functionally, catalyzes the GTP-dependent ribosomal translocation step during translation elongation. During this step, the ribosome changes from the pre-translocational (PRE) to the post-translocational (POST) state as the newly formed A-site-bound peptidyl-tRNA and P-site-bound deacylated tRNA move to the P and E sites, respectively. Catalyzes the coordinated movement of the two tRNA molecules, the mRNA and conformational changes in the ribosome. In Thermococcus gammatolerans (strain DSM 15229 / JCM 11827 / EJ3), this protein is Elongation factor 2.